The chain runs to 467 residues: A-type ATP synthase subunit B (467 aa).

The protein belongs to the ATPase alpha/beta chains family. Has multiple subunits with at least A(3), B(3), C, D, E, F, H, I and proteolipid K(x).

The protein localises to the cell membrane. Component of the A-type ATP synthase that produces ATP from ADP in the presence of a proton gradient across the membrane. The B chain is a regulatory subunit. The chain is A-type ATP synthase subunit B from Methanosphaera stadtmanae (strain ATCC 43021 / DSM 3091 / JCM 11832 / MCB-3).